Here is an 855-residue protein sequence, read N- to C-terminus: Cell surface glycoprotein (855 aa).

A signal peptide spans 1 to 22; it reads MTANKQVRAVLLAALMVFSVFA. Residues Asn-78, Asn-83, Asn-108, Asn-167, Asn-174, Asn-187, Asn-203, Asn-227, Asn-230, Asn-313, Asn-363, Asn-441, Asn-548, Asn-588, Asn-608, Asn-620, Asn-642, Asn-656, and Asn-754 are each glycosylated (N-linked (GlcNAc...) asparagine). The span at 782 to 802 shows a compositional bias: low complexity; it reads ETTTAAETTTTEESTETTTTE. A disordered region spans residues 782 to 831; the sequence is ETTTAAETTTTEESTETTTTEESTEEPTETATATEEPTEEATEETTESST. A compositionally biased stretch (acidic residues) spans 817–827; it reads EPTEEATEETT. The helical transmembrane segment at 831 to 851 threads the bilayer; that stretch reads TPGFGVVVALVALVAAALLAV. A PGF sorting signal motif is present at residues 832–834; the sequence is PGF.

This sequence belongs to the halobacterial S-layer protein family. Glycosylated. Post-translationally, cleaved by the archaeosortase ArtA at the C-terminus, with removal of a short hydrophobic segment. In terms of processing, lipidation.

It localises to the secreted. Its subcellular location is the cell wall. The protein localises to the S-layer. The protein resides in the cell membrane. Its function is as follows. S-layer protein. The S-layer is a paracrystalline mono-layered assembly of proteins which coats the surface of the cell. The sequence is that of Cell surface glycoprotein from Haloferax gibbonsii.